A 128-amino-acid chain; its full sequence is Platelet basic protein (128 aa).

The N-terminal stretch at 1–34 (MSLRLDTTPSCNSARPLHALQVLLLLSLLLTALA) is a signal peptide. 2 disulfides stabilise this stretch: C63–C89 and C65–C105.

It belongs to the intercrine alpha (chemokine CxC) family. Beta-thromboglobulin is a homotetramer. In terms of processing, proteolytic removal of residues 1-9 produces the active peptide connective tissue-activating peptide III (CTAP-III) (low-affinity platelet factor IV (LA-PF4)). Post-translationally, proteolytic removal of residues 1-13 produces the active peptide beta-thromboglobulin, which is released from platelets along with platelet factor 4 and platelet-derived growth factor. NAP-2(1-66) is produced by proteolytical processing, probably after secretion by leukocytes other than neutrophils. In terms of processing, NAP-2(73) and NAP-2(74) seem not be produced by proteolytical processing of secreted precursors but are released in an active form from platelets.

Its subcellular location is the secreted. In terms of biological role, LA-PF4 stimulates DNA synthesis, mitosis, glycolysis, intracellular cAMP accumulation, prostaglandin E2 secretion, and synthesis of hyaluronic acid and sulfated glycosaminoglycan. It also stimulates the formation and secretion of plasminogen activator by human synovial cells. NAP-2 is a ligand for CXCR1 and CXCR2, and NAP-2, NAP-2(73), NAP-2(74), NAP-2(1-66), and most potent NAP-2(1-63) are chemoattractants and activators for neutrophils. TC-1 and TC-2 are antibacterial proteins, in vitro released from activated platelet alpha-granules. CTAP-III(1-81) is more potent than CTAP-III desensitize chemokine-induced neutrophil activation. The sequence is that of Platelet basic protein (PPBP) from Homo sapiens (Human).